Consider the following 489-residue polypeptide: uncharacterized protein (489 aa).

12 helical membrane passes run 14-34 (LLFV…ISLF), 36-56 (LGPF…IVTL), 100-120 (IIGP…FSGI), 127-147 (LVNT…LAFI), 158-178 (LIAL…IVAI), 203-223 (EISF…YAGV), 241-261 (ILIV…IILN), 286-306 (AAGL…NVST), 344-364 (IWFT…IPLV), 380-400 (VGSA…FKFI), 419-439 (LFCL…FPVI), and 449-469 (HTLT…LFLL).

The protein to M.genitalium MG226.

It localises to the cell membrane. This is an uncharacterized protein from Mycoplasma genitalium (strain ATCC 33530 / DSM 19775 / NCTC 10195 / G37) (Mycoplasmoides genitalium).